Reading from the N-terminus, the 912-residue chain is Collagen alpha-2(I) chain (912 aa).

Low complexity predominate over residues 1–41 (GPMGIMGPRGPPGASGAPGPQGFQGPAGEPGEPGQTGPAGA). Disordered regions lie at residues 1 to 206 (GPMG…GITG), 222 to 739 (IPGP…GIIG), and 763 to 912 (GPPG…RGSQ). Residues 43 to 57 (AGEDGHPGKPGRPGE) show a composition bias toward basic and acidic residues. Composition is skewed to low complexity over residues 124–153 (VGAP…SAGP), 178–192 (AGPR…ISGP), 229–244 (PGPA…RGIV), 295–327 (PGIR…VRGP), 360–382 (PVGI…RGEP), and 406–424 (AGIA…NGAQ). The span at 431–440 (GVQGGKGEQG) shows a compositional bias: gly residues. 2 stretches are compositionally biased toward low complexity: residues 474-501 (IPGP…SRGP) and 517-532 (IGAP…SGIP). Gly residues predominate over residues 539–548 (GIPGGKGEIG). 2 stretches are compositionally biased toward low complexity: residues 549-612 (NPGR…QPGA) and 622-637 (NGPV…AGPS). A compositionally biased stretch (gly residues) spans 647–656 (GSRGDGGPPG). Low complexity-rich tracts occupy residues 658–667 (TGFPGAAGRT), 728–739 (PQGIIGAPGIIG), 763–785 (GPPG…APGE), 805–815 (NAGPVGAVGAP), and 830–850 (PGPV…PSGP).

It belongs to the fibrillar collagen family. In terms of assembly, trimers of one alpha 2(I) and two alpha 1(I) chains. Interacts (via C-terminus) with TMEM131 (via PapD-L domain); the interaction is direct and is involved in assembly and TRAPPIII ER-to-Golgi transport complex-dependent secretion of collagen. Post-translationally, prolines at the third position of the tripeptide repeating unit (G-X-Y) are hydroxylated in some or all of the chains. In terms of tissue distribution, forms the fibrils of tendon, ligaments and bones. In bones, the fibrils are mineralized with calcium hydroxyapatite.

It localises to the secreted. The protein localises to the extracellular space. Its subcellular location is the extracellular matrix. Its function is as follows. Type I collagen is a member of group I collagen (fibrillar forming collagen). The protein is Collagen alpha-2(I) chain of Equus sp.